A 654-amino-acid polypeptide reads, in one-letter code: Tetracycline resistance protein TetQ (654 aa).

The tr-type G domain maps to 1-244 (MNIINLGILA…AISSFILPPE (244 aa)). GTP is bound by residues 10-17 (AHIDAGKT), 74-78 (DTPGH), and 128-131 (NKID).

Belongs to the TRAFAC class translation factor GTPase superfamily. Classic translation factor GTPase family. TetM/TetO subfamily.

Abolishes the inhibitory effect of tetracyclin on protein synthesis by a non-covalent modification of the ribosomes. This is Tetracycline resistance protein TetQ (tetQ) from Prevotella intermedia.